The sequence spans 320 residues: UDP-3-O-acyl-N-acetylglucosamine deacetylase (320 aa).

Zn(2+) is bound by residues His92, His251, and Asp255. His278 (proton donor) is an active-site residue.

The protein belongs to the LpxC family. Zn(2+) serves as cofactor.

It carries out the reaction a UDP-3-O-[(3R)-3-hydroxyacyl]-N-acetyl-alpha-D-glucosamine + H2O = a UDP-3-O-[(3R)-3-hydroxyacyl]-alpha-D-glucosamine + acetate. The protein operates within glycolipid biosynthesis; lipid IV(A) biosynthesis; lipid IV(A) from (3R)-3-hydroxytetradecanoyl-[acyl-carrier-protein] and UDP-N-acetyl-alpha-D-glucosamine: step 2/6. In terms of biological role, catalyzes the hydrolysis of UDP-3-O-myristoyl-N-acetylglucosamine to form UDP-3-O-myristoylglucosamine and acetate, the committed step in lipid A biosynthesis. The chain is UDP-3-O-acyl-N-acetylglucosamine deacetylase from Psychrobacter arcticus (strain DSM 17307 / VKM B-2377 / 273-4).